Here is a 114-residue protein sequence, read N- to C-terminus: Large ribosomal subunit protein uL22 (114 aa).

It belongs to the universal ribosomal protein uL22 family. In terms of assembly, part of the 50S ribosomal subunit.

Its function is as follows. This protein binds specifically to 23S rRNA; its binding is stimulated by other ribosomal proteins, e.g. L4, L17, and L20. It is important during the early stages of 50S assembly. It makes multiple contacts with different domains of the 23S rRNA in the assembled 50S subunit and ribosome. The globular domain of the protein is located near the polypeptide exit tunnel on the outside of the subunit, while an extended beta-hairpin is found that lines the wall of the exit tunnel in the center of the 70S ribosome. This is Large ribosomal subunit protein uL22 from Streptococcus suis (strain 98HAH33).